The primary structure comprises 374 residues: tRNA-specific 2-thiouridylase MnmA (374 aa).

Residues Gly15–Ser22 and Met41 contribute to the ATP site. The interval Asn101–Asp103 is interaction with target base in tRNA. The Nucleophile role is filled by Cys106. Cys106 and Cys206 are oxidised to a cystine. Gly130 contacts ATP. The tract at residues Lys156–Gln158 is interaction with tRNA. Cys206 acts as the Cysteine persulfide intermediate in catalysis. Positions Arg324 to Tyr325 are interaction with tRNA.

Belongs to the MnmA/TRMU family.

It localises to the cytoplasm. It carries out the reaction S-sulfanyl-L-cysteinyl-[protein] + uridine(34) in tRNA + AH2 + ATP = 2-thiouridine(34) in tRNA + L-cysteinyl-[protein] + A + AMP + diphosphate + H(+). Functionally, catalyzes the 2-thiolation of uridine at the wobble position (U34) of tRNA, leading to the formation of s(2)U34. The sequence is that of tRNA-specific 2-thiouridylase MnmA from Aromatoleum aromaticum (strain DSM 19018 / LMG 30748 / EbN1) (Azoarcus sp. (strain EbN1)).